The chain runs to 325 residues: HTH-type transcriptional regulator VqsM (325 aa).

The region spanning Gln226 to Ser323 is the HTH araC/xylS-type domain. 2 consecutive DNA-binding regions (H-T-H motif) follow at residues Val243–Gly264 and Val290–Thr313.

In terms of biological role, transcriptional regulator involved in both the repression (at least 99 genes, such as mexR and algU) and in the activation (at least 203 genes, such as mvfR, rsaL, vqsR and rpoS) of regulatory or putative regulatory proteins which are implicated in quorum sensing, virulence and multidrug resistance. This chain is HTH-type transcriptional regulator VqsM (vqsM), found in Pseudomonas aeruginosa (strain ATCC 15692 / DSM 22644 / CIP 104116 / JCM 14847 / LMG 12228 / 1C / PRS 101 / PAO1).